The chain runs to 342 residues: S-adenosylmethionine:tRNA ribosyltransferase-isomerase (342 aa).

This sequence belongs to the QueA family. In terms of assembly, monomer.

Its subcellular location is the cytoplasm. It carries out the reaction 7-aminomethyl-7-carbaguanosine(34) in tRNA + S-adenosyl-L-methionine = epoxyqueuosine(34) in tRNA + adenine + L-methionine + 2 H(+). It functions in the pathway tRNA modification; tRNA-queuosine biosynthesis. Transfers and isomerizes the ribose moiety from AdoMet to the 7-aminomethyl group of 7-deazaguanine (preQ1-tRNA) to give epoxyqueuosine (oQ-tRNA). This chain is S-adenosylmethionine:tRNA ribosyltransferase-isomerase, found in Listeria welshimeri serovar 6b (strain ATCC 35897 / DSM 20650 / CCUG 15529 / CIP 8149 / NCTC 11857 / SLCC 5334 / V8).